We begin with the raw amino-acid sequence, 244 residues long: Probable hydrolase R7 (244 aa).

Residues 1–20 (MTKPFILLVPGSFAPETIYA) form the signal peptide. Residues Asp192 and His224 each act as charge relay system in the active site. Asn227 carries an N-linked (GlcNAc...) asparagine glycan.

It belongs to the AB hydrolase superfamily.

Its pathway is secondary metabolite biosynthesis. In terms of biological role, probable hydrolase; part of the gene cluster that mediates the biosynthesis of squalestatin S1 (SQS1, also known as zaragozic acid A), a lead compound for the treatment of hyper-cholesterolemia by targeting squalene synthase (SS). Both phenylalanine and benzoic acid are known precursors of SQS1 and so it is unsurprising that the cluster also contains genes potentially involved in benzoate production such as phenyl-alanine ammonia lysase (PAL) M7, which catalyzes the first step in the degradation of phenylalanine, or the NADP-dependent dehydrogenase M3. The cluster contains two PKS encoding genes. The tetraketide synthase is responsible for the biosynthesis of the tetraketide sidechain of SQS1. The biosynthesis must involve 3 rounds of chain extension. After the first and second rounds methyl-transfer occurs, and in all rounds of extension the ketoreductase and dehydratase areactive. The enoyl reductase and C-MeT are not active in the final round of extension. The other PKS is therefore likely to encode squalestatin hexaketide synthase (SQHKS). The hexaketide main chain is initiated by benzoate which is an unusual starter unit for a highly reducing polyketide synthase. The cluster also contains a gene encoding a citrate synthase-like protein R3 presumably involved in linking the hexaketide to the oxaloacetate moiety. Formation of the tetraketide CoA may be catalyzed by the M9 CoA ligase, but the mechanism of release of the tetraketide and the hexaketide from their respective PKS remains unknown, although the cluster encodes a potential esterase (M8) and a possible hydrolase (M10) which could be involved in these processes. Two acyltransferases (AT), M4 and R4, are also encoded in the cluster. M4 is responsible for loading of the tetraketide sidechain from CoA onto the squalestatin core as the final step of biosynthesis. M4 appears to have a broad substrate selectivity for its acyl CoA substrate, allowing the in vitro synthesis of novel squalestatins. The biosynthesis of SQS1 requires several oxidative steps likely performed by oxidoreductases M1, R1 and R2. Finally, in support of the identification of the cluster as being responsible for SQS1 production, the cluster contains a gene encoding a putative squalene synthase (SS) R6, suggesting a likely mechanism for self-resistance. The polypeptide is Probable hydrolase R7 (Phoma sp. (strain ATCC 20986 / MF5453)).